The chain runs to 203 residues: Adenosylcobalamin/alpha-ribazole phosphatase (203 aa).

Residue histidine 8 is the Tele-phosphohistidine intermediate of the active site. The active-site Proton donor/acceptor is the glutamate 81.

Belongs to the phosphoglycerate mutase family.

The catalysed reaction is adenosylcob(III)alamin 5'-phosphate + H2O = adenosylcob(III)alamin + phosphate. The enzyme catalyses alpha-ribazole 5'-phosphate + H2O = alpha-ribazole + phosphate. The protein operates within nucleoside biosynthesis; alpha-ribazole biosynthesis; alpha-ribazole from 5,6-dimethylbenzimidazole: step 2/2. Its function is as follows. Catalyzes the conversion of adenosylcobalamin 5'-phosphate to adenosylcobalamin (vitamin B12); involved in the assembly of the nucleotide loop of cobalamin. Also catalyzes the hydrolysis of the phospho group from alpha-ribazole 5'-phosphate to form alpha-ribazole. This Escherichia coli (strain K12) protein is Adenosylcobalamin/alpha-ribazole phosphatase (cobC).